The following is a 169-amino-acid chain: Shikimate kinase (169 aa).

Position 12–17 (G12–T17) interacts with ATP. S16 provides a ligand contact to Mg(2+). D34, R58, and G80 together coordinate substrate. R117 is a binding site for ATP. Position 136 (R136) interacts with substrate.

It belongs to the shikimate kinase family. Monomer. Mg(2+) serves as cofactor.

It localises to the cytoplasm. The catalysed reaction is shikimate + ATP = 3-phosphoshikimate + ADP + H(+). Its pathway is metabolic intermediate biosynthesis; chorismate biosynthesis; chorismate from D-erythrose 4-phosphate and phosphoenolpyruvate: step 5/7. Catalyzes the specific phosphorylation of the 3-hydroxyl group of shikimic acid using ATP as a cosubstrate. The polypeptide is Shikimate kinase (Rhodococcus erythropolis (strain PR4 / NBRC 100887)).